The chain runs to 133 residues: Lanmodulin (133 aa).

Positions 1–21 (MAFRLSSAVLLAALVAAPAYA) are cleaved as a signal peptide. The Nd(3+) site is built by Asp-35, Asp-37, Asp-39, Thr-41, Glu-46, Asp-59, Asp-61, Asp-63, Thr-65, Glu-70, Asp-84, Asp-86, Asp-88, Thr-90, Glu-95, Asn-108, Asp-110, Asp-112, Thr-114, and Glu-119. EF-hand domains lie at 35-46 (DPDKDGTIDLKE), 59-70 (DPDKDGTLDAKE), 84-95 (DPDNDGTLDKKE), and 108-119 (NPDNDGTIDARE).

Monomer.

Its subcellular location is the periplasm. Functionally, high-affinity lanthanide (Ln)-binding protein. Shows 100 million-fold selectivity for La(3+) over Ca(2+). Binds 3 equiv of Ln(3+) with picomolar affinity and a fourth with approximately micromolar affinity. May be involved in receiving and then transporting lanthanides (such as La(3+), Nd(3+) and Sm(3+)) to a specific periplasmic destination. The sequence is that of Lanmodulin from Methylorubrum extorquens (strain ATCC 14718 / DSM 1338 / JCM 2805 / NCIMB 9133 / AM1) (Methylobacterium extorquens).